We begin with the raw amino-acid sequence, 784 residues long: MPHTLWMVWVLGVIISLSKEESSNQASLSCDRNGICKGSSGSLNSIPSGLTEAVKSLDLSNNRITYISNSDLQRCVNLQALVLTSNGINTIEEDSFSSLGSLEHLDLSYNYLSNLSSSWFKPLSSLTFLNLLGNPYKTLGETSLFSHLTKLQILRVGNMDTFTKIQRKDFAGLTFLEELEIDASDLQSYEPKSLKSIQNVSHLILHMKQHILLLEIFVDVTSSVECLELRDTDLDTFHFSELSTGETNSLIKKFTFRNVKITDESLFQVMKLLNQISGLLELEFDDCTLNGVGNFRASDNDRVIDPGKVETLTIRRLHIPRFYLFYDLSTLYSLTERVKRITVENSKVFLVPCLLSQHLKSLEYLDLSENLMVEEYLKNSACEDAWPSLQTLILRQNHLASLEKTGETLLTLKNLTNIDISKNSFHSMPETCQWPEKMKYLNLSSTRIHSVTGCIPKTLEILDVSNNNLNLFSLNLPQLKELYISRNKLMTLPDASLLPMLLVLKISRNAITTFSKEQLDSFHTLKTLEAGGNNFICSCEFLSFTQEQQALAKVLIDWPANYLCDSPSHVRGQQVQDVRLSVSECHRTALVSGMCCALFLLILLTGVLCHRFHGLWYMKMMWAWLQAKRKPRKAPSRNICYDAFVSYSERDAYWVENLMVQELENFNPPFKLCLHKRDFIPGKWIIDNIIDSIEKSHKTVFVLSENFVKSEWCKYELDFSHFRLFDENNDAAILILLEPIEKKAIPQRFCKLRKIMNTKTYLEWPMDEAQREGFWVNLRAAIKS.

The N-terminal stretch at 1-20 is a signal peptide; it reads MPHTLWMVWVLGVIISLSKE. The Extracellular segment spans residues 21-588; it reads ESSNQASLSC…RLSVSECHRT (568 aa). Cys-30 and Cys-36 are disulfide-bonded. LRR repeat units lie at residues 54-77, 78-101, 102-125, 126-150, 151-175, 176-199, 200-223, 224-250, 251-278, 279-308, 309-337, 338-361, 362-388, 389-414, 415-437, 438-457, 458-478, 479-500, and 501-524; these read VKSLDLSNNRITYISNSDLQRCVN, LQALVLTSNGINTIEEDSFSSLGS, LEHLDLSYNYLSNLSSSWFKPLSS, LTFLNLLGNPYKTLGETSLFSHLTK, LQILRVGNMDTFTKIQRKDFAGLTF, LEELEIDASDLQSYEPKSLKSIQN, VSHLILHMKQHILLLEIFVDVTSS, VECLELRDTDLDTFHFSELSTGETNSL, IKKFTFRNVKITDESLFQVMKLLNQISG, LLELEFDDCTLNGVGNFRASDNDRVIDPGK, VETLTIRRLHIPRFYLFYDLSTLYSLTER, VKRITVENSKVFLVPCLLSQHLKS, LEYLDLSENLMVEEYLKNSACEDAWPS, LQTLILRQNHLASLEKTGETLLTLKN, LTNIDISKNSFHSMPETCQWPEK, MKYLNLSSTRIHSVTGCIPK, TLEILDVSNNNLNLFSLNLPQ, LKELYISRNKLMTLPDASLLPM, and LLVLKISRNAITTFSKEQLDSFHT. The N-linked (GlcNAc...) asparagine glycan is linked to Asn-114. Asn-199 carries an N-linked (GlcNAc...) asparagine glycan. Cys-353 and Cys-382 are oxidised to a cystine. Asn-414 carries N-linked (GlcNAc...) asparagine glycosylation. An intrachain disulfide couples Cys-432 to Cys-454. N-linked (GlcNAc...) asparagine glycosylation occurs at Asn-442. The 55-residue stretch at 525–579 folds into the LRRCT domain; sequence LKTLEAGGNNFICSCEFLSFTQEQQALAKVLIDWPANYLCDSPSHVRGQQVQDVR. A helical membrane pass occupies residues 589 to 609; it reads ALVSGMCCALFLLILLTGVLC. At 610–784 the chain is on the cytoplasmic side; it reads HRFHGLWYMK…WVNLRAAIKS (175 aa). Positions 639 to 782 constitute a TIR domain; the sequence is ICYDAFVSYS…GFWVNLRAAI (144 aa). Residue Lys-754 forms a Glycyl lysine isopeptide (Lys-Gly) (interchain with G-Cter in ubiquitin) linkage. The ATG16L1-binding motif motif lies at 761 to 778; the sequence is YLEWPMDEAQREGFWVNL.

Belongs to the Toll-like receptor family. As to quaternary structure, interacts with LY96, TLR1 and TLR6 (via extracellular domain). TLR2 seems to exist in heterodimers with either TLR1 or TLR6 before stimulation by the ligand. The heterodimers form bigger oligomers in response to their corresponding ligands as well as further heterotypic associations with other receptors such as CD14 and/or CD36. Binds MYD88 (via TIR domain). Interacts with TICAM1. Interacts with CNPY3. Interacts with ATG16L1. Interacts with PPP1R11. Interacts with TICAM2. Interacts with TIRAP. (Microbial infection) Interacts with M.tuberculosis EsxA. In terms of assembly, (Microbial infection) Interacts with M.bovis MPB83. As to quaternary structure, (Microbial infection) Interacts with Staphylococcus aureus protein SSL5. Post-translationally, glycosylation of Asn-442 is critical for secretion of the N-terminal ectodomain of TLR2. In terms of processing, ubiquitinated at Lys-754 by PPP1R11, leading to its degradation. Deubiquitinated by USP2. In terms of tissue distribution, highly expressed in peripheral blood leukocytes, in particular in monocytes, in bone marrow, lymph node and in spleen. Also detected in lung and in fetal liver. Levels are low in other tissues.

Its subcellular location is the membrane. It localises to the cytoplasmic vesicle. It is found in the phagosome membrane. The protein resides in the membrane raft. Its function is as follows. Cooperates with LY96 to mediate the innate immune response to bacterial lipoproteins and other microbial cell wall components. Cooperates with TLR1 or TLR6 to mediate the innate immune response to bacterial lipoproteins or lipopeptides. Acts via MYD88 and TRAF6, leading to NF-kappa-B activation, cytokine secretion and the inflammatory response. May also activate immune cells and promote apoptosis in response to the lipid moiety of lipoproteins. Recognizes mycoplasmal macrophage-activating lipopeptide-2kD (MALP-2), soluble tuberculosis factor (STF), phenol-soluble modulin (PSM) and B.burgdorferi outer surface protein A lipoprotein (OspA-L) cooperatively with TLR6. Stimulation of monocytes in vitro with M.tuberculosis PstS1 induces p38 MAPK and ERK1/2 activation primarily via this receptor, but also partially via TLR4. MAPK activation in response to bacterial peptidoglycan also occurs via this receptor. Acts as a receptor for M.tuberculosis lipoproteins LprA, LprG, LpqH and PstS1, some lipoproteins are dependent on other coreceptors (TLR1, CD14 and/or CD36); the lipoproteins act as agonists to modulate antigen presenting cell functions in response to the pathogen. M.tuberculosis HSP70 (dnaK) but not HSP65 (groEL-2) acts via this protein to stimulate NF-kappa-B expression. Recognizes M.tuberculosis major T-antigen EsxA (ESAT-6) which inhibits downstream MYD88-dependent signaling (shown in mouse). Forms activation clusters composed of several receptors depending on the ligand, these clusters trigger signaling from the cell surface and subsequently are targeted to the Golgi in a lipid-raft dependent pathway. Forms the cluster TLR2:TLR6:CD14:CD36 in response to diacylated lipopeptides and TLR2:TLR1:CD14 in response to triacylated lipopeptides. Required for normal uptake of M.tuberculosis, a process that is inhibited by M.tuberculosis LppM. In Homo sapiens (Human), this protein is Toll-like receptor 2.